The sequence spans 337 residues: Mannan polymerase complex subunit mnn9 (337 aa).

The Cytoplasmic segment spans residues 1 to 8 (MRVYNKSR). The helical; Signal-anchor for type II membrane protein transmembrane segment at 9–29 (IVGQLLFVALGITFIYYLFTP) threads the bilayer. The Lumenal segment spans residues 30–337 (SVNSNAKVQI…PYYLVFHHNE (308 aa)).

This sequence belongs to the ANP1/MMN9/VAN1 family.

The protein localises to the endoplasmic reticulum membrane. It localises to the golgi apparatus membrane. Its pathway is protein modification; protein glycosylation. In terms of biological role, required for the addition of the long alpha 1,6-mannose backbone of N-linked glycans on cell wall and periplasmic proteins. The protein is Mannan polymerase complex subunit mnn9 of Schizosaccharomyces pombe (strain 972 / ATCC 24843) (Fission yeast).